The primary structure comprises 453 residues: Adenylyltransferase and sulfurtransferase MOCS3 (453 aa).

Phosphothreonine is present on Thr62. Residues Gly101, Asp122, 129 to 133 (SNFHR), Lys146, and 190 to 191 (DN) contribute to the ATP site. Cys231 and Cys234 together coordinate Zn(2+). Cys248 serves as the catalytic Glycyl thioester intermediate; for adenylyltransferase activity. Zn(2+)-binding residues include Cys306 and Cys309. Residues 355 to 451 (QAKPHLLIDV…WTSNIDPNFP (97 aa)) form the Rhodanese domain. Catalysis depends on Cys410, which acts as the Cysteine persulfide intermediate; for sulfurtransferase activity.

It in the N-terminal section; belongs to the HesA/MoeB/ThiF family. UBA4 subfamily. Zn(2+) serves as cofactor.

Its subcellular location is the cytoplasm. The protein localises to the cytosol. The enzyme catalyses [molybdopterin-synthase sulfur-carrier protein]-C-terminal Gly-Gly + ATP + H(+) = [molybdopterin-synthase sulfur-carrier protein]-C-terminal Gly-Gly-AMP + diphosphate. It catalyses the reaction [molybdopterin-synthase sulfur-carrier protein]-C-terminal Gly-Gly-AMP + S-sulfanyl-L-cysteinyl-[cysteine desulfurase] + AH2 = [molybdopterin-synthase sulfur-carrier protein]-C-terminal-Gly-aminoethanethioate + L-cysteinyl-[cysteine desulfurase] + A + AMP + 2 H(+). It functions in the pathway tRNA modification; 5-methoxycarbonylmethyl-2-thiouridine-tRNA biosynthesis. It participates in cofactor biosynthesis; molybdopterin biosynthesis. Functionally, plays a central role in 2-thiolation of mcm(5)S(2)U at tRNA wobble positions of cytosolic tRNA(Lys), tRNA(Glu) and tRNA(Gln). Also essential during biosynthesis of the molybdenum cofactor. Acts by mediating the C-terminal thiocarboxylation of sulfur carriers URM1 and MOCS2A. Its N-terminus first activates URM1 and MOCS2A as acyl-adenylates (-COAMP), then the persulfide sulfur on the catalytic cysteine is transferred to URM1 and MOCS2A to form thiocarboxylation (-COSH) of their C-terminus. The reaction probably involves hydrogen sulfide that is generated from the persulfide intermediate and that acts as a nucleophile towards URM1 and MOCS2A. Subsequently, a transient disulfide bond is formed. Does not use thiosulfate as sulfur donor; NFS1 probably acting as a sulfur donor for thiocarboxylation reactions. This is Adenylyltransferase and sulfurtransferase MOCS3 from Drosophila sechellia (Fruit fly).